The sequence spans 411 residues: Glucose-1-phosphate adenylyltransferase (411 aa).

Alpha-D-glucose 1-phosphate is bound by residues Gly-164, Glu-179–Lys-180, and Ser-197.

Belongs to the bacterial/plant glucose-1-phosphate adenylyltransferase family. Homotetramer.

The catalysed reaction is alpha-D-glucose 1-phosphate + ATP + H(+) = ADP-alpha-D-glucose + diphosphate. It participates in glycan biosynthesis; glycogen biosynthesis. In terms of biological role, involved in the biosynthesis of ADP-glucose, a building block required for the elongation reactions to produce glycogen. Catalyzes the reaction between ATP and alpha-D-glucose 1-phosphate (G1P) to produce pyrophosphate and ADP-Glc. In Corynebacterium kroppenstedtii (strain DSM 44385 / JCM 11950 / CIP 105744 / CCUG 35717), this protein is Glucose-1-phosphate adenylyltransferase.